A 231-amino-acid polypeptide reads, in one-letter code: MRNILPFLTRIPVKGDFEKARNELWAFPLVALVSSALPTLILYLGLPLSNLLAVLALYWTIGLLHLDGLADWADGIMAKGDRERKIEVMKDVNTGIAGLFAVVIVLLLQVYSLQLLPFYALFLAELNSKYAMLLALATKRPLGKGLGAYFMEGMNGRQLALGTLLYVLLGLSVVLFEPRALAGILGLLFGVHIIRISLKNFDGLNGDCLGATAEITRAGTLVVMALVWWYL.

6 helical membrane passes run 24-44 (LWAF…ILYL), 46-66 (LPLS…LLHL), 96-116 (IAGL…LQLL), 159-176 (LALG…VVLF), 181-198 (LAGI…RISL), and 209-229 (LGAT…LVWW).

The protein belongs to the CobS family. Mg(2+) is required as a cofactor.

Its subcellular location is the cell membrane. The catalysed reaction is alpha-ribazole + adenosylcob(III)inamide-GDP = adenosylcob(III)alamin + GMP + H(+). It carries out the reaction alpha-ribazole 5'-phosphate + adenosylcob(III)inamide-GDP = adenosylcob(III)alamin 5'-phosphate + GMP + H(+). The protein operates within cofactor biosynthesis; adenosylcobalamin biosynthesis; adenosylcobalamin from cob(II)yrinate a,c-diamide: step 7/7. In terms of biological role, joins adenosylcobinamide-GDP and alpha-ribazole to generate adenosylcobalamin (Ado-cobalamin). Also synthesizes adenosylcobalamin 5'-phosphate from adenosylcobinamide-GDP and alpha-ribazole 5'-phosphate. The polypeptide is Adenosylcobinamide-GDP ribazoletransferase (Thermococcus kodakarensis (strain ATCC BAA-918 / JCM 12380 / KOD1) (Pyrococcus kodakaraensis (strain KOD1))).